The chain runs to 52 residues: Venom peptide 4b (52 aa).

Positions 1 to 23 (MRSAILLVIVAIVAILGFLGVNA) are cleaved as a signal peptide. 3 AXPX repeats span residues 23–26 (AEPL), 31–34 (AEPN), and 39–42 (AAPL). The propeptide occupies 24–41 (EPLPSPLAEPNPHAKAAP). Residues 30–52 (LAEPNPHAKAAPLSPAAMASLAG) form a disordered region. Over residues 37-52 (AKAAPLSPAAMASLAG) the composition is skewed to low complexity. Alanine 51 carries the alanine amide modification.

Expressed by the venom gland.

The protein resides in the secreted. The polypeptide is Venom peptide 4b (Eumenes pomiformis (Potter wasp)).